The sequence spans 218 residues: Putative pre-16S rRNA nuclease (218 aa).

This sequence belongs to the YqgF nuclease family.

The protein resides in the cytoplasm. Its function is as follows. Could be a nuclease involved in processing of the 5'-end of pre-16S rRNA. In Thermotoga maritima (strain ATCC 43589 / DSM 3109 / JCM 10099 / NBRC 100826 / MSB8), this protein is Putative pre-16S rRNA nuclease.